A 530-amino-acid chain; its full sequence is Ubiquitin carboxyl-terminal hydrolase 17-like protein 22 (530 aa).

Residues 80–375 form the USP domain; sequence AGLQNMGNTC…QAYVLFYIQK (296 aa). Catalysis depends on Cys-89, which acts as the Nucleophile. The Proton acceptor role is filled by His-334. Composition is skewed to basic and acidic residues over residues 382-392 and 398-412; these read SESVSRGREPR and DTDR…KRDH. Disordered stretches follow at residues 382-412 and 476-530; these read SESV…KRDH and KNHH…LVCQ. Over residues 484 to 495 the composition is skewed to low complexity; it reads SSLLKLSSTTPT. The segment covering 496 to 505 has biased composition (polar residues); the sequence is HQESMNTGTL. Residues 510–524 show a composition bias toward basic residues; that stretch reads GRARRSKGKNKHSKR.

This sequence belongs to the peptidase C19 family. USP17 subfamily.

It is found in the nucleus. The protein resides in the endoplasmic reticulum. It carries out the reaction Thiol-dependent hydrolysis of ester, thioester, amide, peptide and isopeptide bonds formed by the C-terminal Gly of ubiquitin (a 76-residue protein attached to proteins as an intracellular targeting signal).. Functionally, deubiquitinating enzyme that removes conjugated ubiquitin from specific proteins to regulate different cellular processes that may include cell proliferation, progression through the cell cycle, apoptosis, cell migration, and the cellular response to viral infection. This is Ubiquitin carboxyl-terminal hydrolase 17-like protein 22 (USP17L22) from Homo sapiens (Human).